Consider the following 306-residue polypeptide: Acetaldehyde dehydrogenase (306 aa).

The Acyl-thioester intermediate role is filled by C131. NAD(+) is bound by residues 162–170 and N273; that span reads SAGPGTRKN.

Belongs to the acetaldehyde dehydrogenase family.

It carries out the reaction acetaldehyde + NAD(+) + CoA = acetyl-CoA + NADH + H(+). The chain is Acetaldehyde dehydrogenase from Albidiferax ferrireducens (strain ATCC BAA-621 / DSM 15236 / T118) (Rhodoferax ferrireducens).